The primary structure comprises 713 residues: Mitochondrial intermediate peptidase (713 aa).

The N-terminal 35 residues, Met1–Arg35, are a transit peptide targeting the mitochondrion. Lys126 is modified (N6-acetyllysine). His495 serves as a coordination point for Zn(2+). The active site involves Glu496. Positions 499 and 502 each coordinate Zn(2+).

Belongs to the peptidase M3 family. Monomer. Zn(2+) is required as a cofactor.

Its subcellular location is the mitochondrion matrix. The enzyme catalyses Release of an N-terminal octapeptide as second stage of processing of some proteins imported into the mitochondrion.. Activity is divalent cation-dependent. It is stimulated by manganese, magnesium or calcium ions and reversibly inhibited by zinc, cobalt and iron. Cleaves proteins, imported into the mitochondrion, to their mature size. The sequence is that of Mitochondrial intermediate peptidase (MIPEP) from Homo sapiens (Human).